The following is a 417-amino-acid chain: Succinate--CoA ligase [ADP-forming] subunit beta, mitochondrial (417 aa).

The N-terminal 24 residues, 1 to 24 (MLRKLANQSLSVAGKWQQQQLRRL), are a transit peptide targeting the mitochondrion. In terms of domain architecture, ATP-grasp spans 32 to 275 (AELMSKYGIN…SSQEDPREVA (244 aa)). ATP contacts are provided by residues K71, 78 to 80 (GRG), and E138. Residues N230 and D244 each coordinate Mg(2+). Substrate-binding positions include N295 and 352–354 (GIM).

Belongs to the succinate/malate CoA ligase beta subunit family. As to quaternary structure, heterodimer of an alpha and a beta subunit. Mg(2+) is required as a cofactor. As to expression, expressed in roots, stems, flowers, leaves and fruits.

It localises to the mitochondrion. It carries out the reaction succinate + ATP + CoA = succinyl-CoA + ADP + phosphate. The protein operates within carbohydrate metabolism; tricarboxylic acid cycle; succinate from succinyl-CoA (ligase route): step 1/1. In terms of biological role, succinyl-CoA synthetase functions in the citric acid cycle (TCA), coupling the hydrolysis of succinyl-CoA to the synthesis of ATP and thus represents the only step of substrate-level phosphorylation in the TCA. The beta subunit provides nucleotide specificity of the enzyme and binds the substrate succinate, while the binding sites for coenzyme A and phosphate are found in the alpha subunit. This chain is Succinate--CoA ligase [ADP-forming] subunit beta, mitochondrial, found in Solanum lycopersicum (Tomato).